Consider the following 312-residue polypeptide: Glyoxylate/hydroxypyruvate reductase A (312 aa).

R227 is a catalytic residue. Catalysis depends on H275, which acts as the Proton donor.

It belongs to the D-isomer specific 2-hydroxyacid dehydrogenase family. GhrA subfamily.

Its subcellular location is the cytoplasm. It catalyses the reaction glycolate + NADP(+) = glyoxylate + NADPH + H(+). The enzyme catalyses (R)-glycerate + NAD(+) = 3-hydroxypyruvate + NADH + H(+). It carries out the reaction (R)-glycerate + NADP(+) = 3-hydroxypyruvate + NADPH + H(+). Catalyzes the NADPH-dependent reduction of glyoxylate and hydroxypyruvate into glycolate and glycerate, respectively. The polypeptide is Glyoxylate/hydroxypyruvate reductase A (Escherichia fergusonii (strain ATCC 35469 / DSM 13698 / CCUG 18766 / IAM 14443 / JCM 21226 / LMG 7866 / NBRC 102419 / NCTC 12128 / CDC 0568-73)).